Here is a 625-residue protein sequence, read N- to C-terminus: MRDFDVIVVGGGHAGIEAAHASARMGCKTLLLTILVEQIGAASCNPAIGGLAKGHLVKEIDALGGVMGKVTDLCGLQFRTLNASKGPAVRGTRAQIDMDRYRIMMRNLCLTTPNLTVAQEMVEELIVEEGAVLGVRTQIGREYRSAKVIMTTGTFLNGLVHIGNRTSSNGRVGEPSSIKLSESLRSLGLEVGRLKTGTCARIASESIDFSVMEQHPGDLPPPPFSFSTKKEEFAPTQLPCYVTYTNEKTHEIIRSNFHRAPMFTGQIEGIGPRYCPSIEDKVNRFKERERHQIFVEPQTLEATEYYLNGLTTSMPFDVQEAMIRSMAGLQNARIVRYGYAIEYDYVNPVELKHTLETKKIKNLYLAGQINGTTGYEEAGAQGLAAGINAALSVKGEEPFVLRRDEAYLGVLIDDLVTKGTKEPYRMFTSRAEYRLLLREDNAEFRLLRHGARFGLVEEEALLALQKDEQSIHGGLVHLRESSATPSKETLAFLEEMGEEKINDKTTWLAIAGRKSFDEAKLRKISPLFEEMSERALGQVLIEAKYASYIQKQQESVGSMQEMLKVKIPEGFIFDTVPGLSLEVIEKLKRFNPPTLFAASEISGITPASLDVLHLYIHLRGKESVD.

FAD contacts are provided by residues 10–15 (GGGHAG), Val122, and Ser177. Residue 271–285 (GPRYCPSIEDKVNRF) coordinates NAD(+). Residue Gln368 participates in FAD binding.

It belongs to the MnmG family. In terms of assembly, homodimer. Heterotetramer of two MnmE and two MnmG subunits. Requires FAD as cofactor.

It localises to the cytoplasm. Functionally, NAD-binding protein involved in the addition of a carboxymethylaminomethyl (cmnm) group at the wobble position (U34) of certain tRNAs, forming tRNA-cmnm(5)s(2)U34. This is tRNA uridine 5-carboxymethylaminomethyl modification enzyme MnmG from Wolinella succinogenes (strain ATCC 29543 / DSM 1740 / CCUG 13145 / JCM 31913 / LMG 7466 / NCTC 11488 / FDC 602W) (Vibrio succinogenes).